Reading from the N-terminus, the 42-residue chain is Small, acid-soluble spore protein L (42 aa).

A disordered region spans residues 1 to 42; sequence MKKKDKGRLTGGVTPQGDLEGNTHNDPKTELEERAKKSNTKR. The span at 21-36 shows a compositional bias: basic and acidic residues; it reads GNTHNDPKTELEERAK.

It is found in the spore core. This is Small, acid-soluble spore protein L (sspL) from Bacillus subtilis (strain 168).